Consider the following 127-residue polypeptide: Protein E7 (127 aa).

An E7 terminal domain region spans residues 2-56 (VQGPTTHRNLDDSPAGPLLILSPCAGTPTRVPAAPDAPDFRLPCHFGRPTRKRGP). The segment at 33 to 66 (PAAPDAPDFRLPCHFGRPTRKRGPSTPPLSSPGK) is disordered. A zinc finger lies at 82–118 (CGHCGKDLTFAVKTGSTTLLGFEHLLNSDLDLLCPRC). The Nuclear export signal signature appears at 100-108 (LLGFEHLLN).

Belongs to the papillomaviridae E7 protein family. In terms of assembly, homodimer. Homooligomer. Interacts with host RB1; this interaction induces dissociation of RB1-E2F1 complex thereby disrupting RB1 activity. Interacts with host EP300; this interaction represses EP300 transcriptional activity. Interacts with protein E2; this interaction inhibits E7 oncogenic activity. Interacts with host TMEM173/STING; this interaction impairs the ability of TMEM173/STING to sense cytosolic DNA and promote the production of type I interferon (IFN-alpha and IFN-beta). Highly phosphorylated.

The protein localises to the host cytoplasm. The protein resides in the host nucleus. Plays a role in viral genome replication by driving entry of quiescent cells into the cell cycle. Stimulation of progression from G1 to S phase allows the virus to efficiently use the cellular DNA replicating machinery to achieve viral genome replication. E7 protein has both transforming and trans-activating activities. Induces the disassembly of the E2F1 transcription factor from RB1, with subsequent transcriptional activation of E2F1-regulated S-phase genes. Interferes with host histone deacetylation mediated by HDAC1 and HDAC2, leading to transcription activation. Also plays a role in the inhibition of both antiviral and antiproliferative functions of host interferon alpha. Interaction with host TMEM173/STING impairs the ability of TMEM173/STING to sense cytosolic DNA and promote the production of type I interferon (IFN-alpha and IFN-beta). This chain is Protein E7, found in Bos taurus (Bovine).